The chain runs to 292 residues: Glycine--tRNA ligase alpha subunit (292 aa).

The protein belongs to the class-II aminoacyl-tRNA synthetase family. In terms of assembly, tetramer of two alpha and two beta subunits.

The protein localises to the cytoplasm. It carries out the reaction tRNA(Gly) + glycine + ATP = glycyl-tRNA(Gly) + AMP + diphosphate. In Synechococcus sp. (strain ATCC 27144 / PCC 6301 / SAUG 1402/1) (Anacystis nidulans), this protein is Glycine--tRNA ligase alpha subunit.